Here is a 212-residue protein sequence, read N- to C-terminus: Hydroxyacylglutathione hydrolase GloC (212 aa).

Zn(2+) is bound by residues His55, His57, Asp59, His60, His132, Asp151, and His192.

It belongs to the metallo-beta-lactamase superfamily. Glyoxalase II family. It depends on Zn(2+) as a cofactor.

It catalyses the reaction an S-(2-hydroxyacyl)glutathione + H2O = a 2-hydroxy carboxylate + glutathione + H(+). The catalysed reaction is (R)-S-lactoylglutathione + H2O = (R)-lactate + glutathione + H(+). It participates in secondary metabolite metabolism; methylglyoxal degradation; (R)-lactate from methylglyoxal: step 2/2. Type II glyoxalase, isozyme of GloB, that hydrolyzes (R)-S-lactoylglutathione to (R)-lactate and glutathione. Plays a role in methylglyoxal (MG) detoxification. The sequence is that of Hydroxyacylglutathione hydrolase GloC from Haemophilus influenzae (strain ATCC 51907 / DSM 11121 / KW20 / Rd).